We begin with the raw amino-acid sequence, 189 residues long: Probable chorismate pyruvate-lyase (189 aa).

Residues arginine 77, leucine 115, and glutamate 174 each contribute to the substrate site.

This sequence belongs to the UbiC family.

The protein resides in the cytoplasm. The enzyme catalyses chorismate = 4-hydroxybenzoate + pyruvate. Its pathway is cofactor biosynthesis; ubiquinone biosynthesis. Removes the pyruvyl group from chorismate, with concomitant aromatization of the ring, to provide 4-hydroxybenzoate (4HB) for the ubiquinone pathway. The chain is Probable chorismate pyruvate-lyase from Shewanella sp. (strain MR-7).